A 505-amino-acid chain; its full sequence is ATP synthase subunit alpha (505 aa).

171–178 (GDRQTGKT) provides a ligand contact to ATP.

Belongs to the ATPase alpha/beta chains family. As to quaternary structure, F-type ATPases have 2 components, CF(1) - the catalytic core - and CF(0) - the membrane proton channel. CF(1) has five subunits: alpha(3), beta(3), gamma(1), delta(1), epsilon(1). CF(0) has three main subunits: a(1), b(2) and c(9-12). The alpha and beta chains form an alternating ring which encloses part of the gamma chain. CF(1) is attached to CF(0) by a central stalk formed by the gamma and epsilon chains, while a peripheral stalk is formed by the delta and b chains.

It is found in the cell inner membrane. The enzyme catalyses ATP + H2O + 4 H(+)(in) = ADP + phosphate + 5 H(+)(out). Functionally, produces ATP from ADP in the presence of a proton gradient across the membrane. The alpha chain is a regulatory subunit. The protein is ATP synthase subunit alpha of Aliarcobacter butzleri (strain RM4018) (Arcobacter butzleri).